Here is a 239-residue protein sequence, read N- to C-terminus: uncharacterized protein (239 aa).

The dksA C4-type; degenerate zinc-finger motif lies at 94–114; that stretch reads CEVSGKEIPFERLEALPTATT. Over residues 133–158 the composition is skewed to acidic residues; it reads ETPFGQFEFDDDEEIRAPYDSEDSYQ. Residues 133–182 form a disordered region; sequence ETPFGQFEFDDDEEIRAPYDSEDSYQDVEKYGNSQTPQDMENPPLSYDDM.

This is an uncharacterized protein from Bacillus subtilis (strain 168).